Reading from the N-terminus, the 180-residue chain is Magnetosome protein MamS (180 aa).

At M1–T21 the chain is on the cytoplasmic side. Residues A22 to L42 traverse the membrane as a helical segment. Residues P43–Q180 are Lumenal-facing.

Belongs to the magnetosome MamS family.

The protein resides in the magnetosome membrane. Its function is as follows. May play a role in magnetite crystal growth and size. This is Magnetosome protein MamS from Magnetospirillum gryphiswaldense (strain DSM 6361 / JCM 21280 / NBRC 15271 / MSR-1).